A 139-amino-acid chain; its full sequence is Translation initiation factor 2 subunit beta (139 aa).

The protein belongs to the eIF-2-beta/eIF-5 family. Heterotrimer composed of an alpha, a beta and a gamma chain.

In terms of biological role, eIF-2 functions in the early steps of protein synthesis by forming a ternary complex with GTP and initiator tRNA. This Sulfurisphaera tokodaii (strain DSM 16993 / JCM 10545 / NBRC 100140 / 7) (Sulfolobus tokodaii) protein is Translation initiation factor 2 subunit beta.